The chain runs to 156 residues: MSRRNISKKRFPKADPTYNSYLVSLLVTRILKSGKKNLAQNIVNSAFDIIKSKTNEDPLVIFEKAIRNASPVVEVKARRIGGSTYQVPIEVSSFRATNLALRWIIQYSRQRVGRTMSIKLASEIIDTANDIGNTIKKKEETHKMADANKAFAHFRY.

This sequence belongs to the universal ribosomal protein uS7 family. In terms of assembly, part of the 30S ribosomal subunit.

The protein localises to the plastid. It is found in the chloroplast. Functionally, one of the primary rRNA binding proteins, it binds directly to 16S rRNA where it nucleates assembly of the head domain of the 30S subunit. The chain is Small ribosomal subunit protein uS7c (rps7) from Thalassiosira pseudonana (Marine diatom).